A 306-amino-acid chain; its full sequence is Agmatinase (306 aa).

The Mn(2+) site is built by His126, Asp149, His151, Asp153, Asp230, and Asp232.

Belongs to the arginase family. Agmatinase subfamily. Requires Mn(2+) as cofactor.

It carries out the reaction agmatine + H2O = urea + putrescine. The protein operates within amine and polyamine biosynthesis; putrescine biosynthesis via agmatine pathway; putrescine from agmatine: step 1/1. Functionally, catalyzes the formation of putrescine from agmatine. The polypeptide is Agmatinase (Escherichia coli O7:K1 (strain IAI39 / ExPEC)).